The chain runs to 135 residues: Large ribosomal subunit protein uL16c (135 aa).

Belongs to the universal ribosomal protein uL16 family. Part of the 50S ribosomal subunit.

The protein resides in the plastid. It is found in the chloroplast. This is Large ribosomal subunit protein uL16c from Jasminum nudiflorum (Winter jasmine).